Reading from the N-terminus, the 113-residue chain is Carboxysome shell protein CcmK4 (113 aa).

The 87-residue stretch at 5-91 (AIGSLETKGF…PHENVEAVFP (87 aa)) folds into the BMC domain.

This sequence belongs to the bacterial microcompartments protein family. CcmK subfamily. In terms of assembly, homohexamer. Interacts stably with CcmK3, probably forms heterohexamers with a 1:2 CcmK3:CcmK4 stoichiometry.

The protein localises to the carboxysome. Functionally, one of the shell proteins of the carboxysome, a polyhedral inclusion where RuBisCO (ribulose bisphosphate carboxylase, rbcL-rbcS) is sequestered. Assembles into hexamers which make sheets that form the facets of the polyhedral carboxysome. The hexamer central pore probably regulates metabolite flux. A minor shell protein of the carboxysome, a polyhedral inclusion where RuBisCO (ribulose bisphosphate carboxylase, rbcL-rbcS) is sequestered. Hexamers form sheets that form the facets of the polyhedral carboxysome. The shell is 4.5 nm thick, as observed for CcmK proteins. In PCC 7942 there are several CcmK paralogs with presumably functional differences; replacing the central pore residues (34-37) with those of CcmK2 from this organism (Tyr-Glu-Lys-Ile) allows the bacterium to make carboxysomes, but the expression level is too low to know if the carboxysome is functional for CO(2) fixation. This subunit probably makes both homohexamers and heterohexamers with CcmK3. The CcmK3-CcmK4 heterohexmers have been suggested to cap other hexamers, perhaps to alter metabolite flux. This Synechococcus elongatus (strain ATCC 33912 / PCC 7942 / FACHB-805) (Anacystis nidulans R2) protein is Carboxysome shell protein CcmK4.